We begin with the raw amino-acid sequence, 256 residues long: RNA polymerase sigma factor SigI1 (256 aa).

Residues 67 to 80 (DEFSIALSAFNEAI) carry the Polymerase core binding motif. Positions 205–224 (RNELKKKAKVHGRTIGNNRK) form a DNA-binding region, H-T-H motif.

The protein belongs to the sigma-70 factor family. SigI subfamily. Interacts with RsgI1.

It localises to the cytoplasm. Negatively regulated by the anti-sigma-I factor RsgI1. Binding of the polysaccharide substrate to RsgI1 may lead to the release and activation of SigI1. Sigma factors are initiation factors that promote the attachment of RNA polymerase to specific initiation sites and are then released. This sigma factor is involved in regulation of cellulosomal genes via an external polysaccharide-sensing mechanism. SigI1 promotes transcription from sigI1 and celS promoters. The chain is RNA polymerase sigma factor SigI1 from Acetivibrio thermocellus (strain ATCC 27405 / DSM 1237 / JCM 9322 / NBRC 103400 / NCIMB 10682 / NRRL B-4536 / VPI 7372) (Clostridium thermocellum).